The primary structure comprises 227 residues: tRNA (guanine-N(7)-)-methyltransferase (227 aa).

E57, E82, D109, and D132 together coordinate S-adenosyl-L-methionine. Residue D132 is part of the active site. Residues K136, D168, and 205-208 contribute to the substrate site; that span reads TKFE.

It belongs to the class I-like SAM-binding methyltransferase superfamily. TrmB family.

It catalyses the reaction guanosine(46) in tRNA + S-adenosyl-L-methionine = N(7)-methylguanosine(46) in tRNA + S-adenosyl-L-homocysteine. It functions in the pathway tRNA modification; N(7)-methylguanine-tRNA biosynthesis. Its function is as follows. Catalyzes the formation of N(7)-methylguanine at position 46 (m7G46) in tRNA. The protein is tRNA (guanine-N(7)-)-methyltransferase of Leifsonia xyli subsp. xyli (strain CTCB07).